We begin with the raw amino-acid sequence, 130 residues long: MAQVEYKGTGRRKHSVARVRLIPGEGNITINGRDVRDYLPFESLILDLNQPFDITETKGNYDVLVNVNGGGLTGQAQAIRHGISRALLEADPEYRGSLKRAGMLTRDPRMKERKKPGLKGARRSPQFSKR.

Residues 98–130 (LKRAGMLTRDPRMKERKKPGLKGARRSPQFSKR) are disordered. Over residues 111–130 (KERKKPGLKGARRSPQFSKR) the composition is skewed to basic residues.

This sequence belongs to the universal ribosomal protein uS9 family.

The polypeptide is Small ribosomal subunit protein uS9 (Macrococcus caseolyticus (strain JCSC5402) (Macrococcoides caseolyticum)).